Consider the following 1260-residue polypeptide: uncharacterized protein (1260 aa).

The protein belongs to the oxoprolinase family.

This is an uncharacterized protein from Schizosaccharomyces pombe (strain 972 / ATCC 24843) (Fission yeast).